A 391-amino-acid polypeptide reads, in one-letter code: 3-ketoacyl-CoA thiolase (391 aa).

Cysteine 95 (acyl-thioester intermediate) is an active-site residue. Active-site proton acceptor residues include histidine 347 and cysteine 377.

It belongs to the thiolase-like superfamily. Thiolase family. As to quaternary structure, heterotetramer of two alpha chains (FadB) and two beta chains (FadA).

It is found in the cytoplasm. It catalyses the reaction an acyl-CoA + acetyl-CoA = a 3-oxoacyl-CoA + CoA. It participates in lipid metabolism; fatty acid beta-oxidation. Its function is as follows. Catalyzes the final step of fatty acid oxidation in which acetyl-CoA is released and the CoA ester of a fatty acid two carbons shorter is formed. The chain is 3-ketoacyl-CoA thiolase from Pseudomonas putida (strain ATCC 700007 / DSM 6899 / JCM 31910 / BCRC 17059 / LMG 24140 / F1).